The following is a 315-amino-acid chain: Glycine--tRNA ligase alpha subunit (315 aa).

It belongs to the class-II aminoacyl-tRNA synthetase family. Tetramer of two alpha and two beta subunits.

It is found in the cytoplasm. The enzyme catalyses tRNA(Gly) + glycine + ATP = glycyl-tRNA(Gly) + AMP + diphosphate. In Pseudomonas entomophila (strain L48), this protein is Glycine--tRNA ligase alpha subunit.